Reading from the N-terminus, the 610-residue chain is Protein Smaug homolog 1 (610 aa).

Ser67 is modified (phosphoserine). Disordered regions lie at residues 177–222, 318–366, and 464–487; these read ARGP…EEGS, SSPS…LQPP, and NRGF…GRRN. Residues 222–295 enclose the SAM domain; sequence SGMKDVPAWL…LKSLERDIIE (74 aa). Ser319 is modified (phosphoserine). Thr323 is subject to Phosphothreonine. A compositionally biased stretch (low complexity) spans 344–358; the sequence is SAATVTSATASASAG. Omega-N-methylarginine is present on Arg465. The span at 467–480 shows a compositional bias: polar residues; the sequence is FGQSNSLPTASSVG. Position 472 is a phosphoserine (Ser472).

This sequence belongs to the SMAUG family. As to expression, expressed in brain (at protein level).

It is found in the cytoplasm. The protein resides in the cell projection. The protein localises to the dendrite. Its subcellular location is the synapse. It localises to the synaptosome. Acts as a translational repressor of SRE-containing messengers. This is Protein Smaug homolog 1 (Samd4a) from Rattus norvegicus (Rat).